Here is a 332-residue protein sequence, read N- to C-terminus: 2,3-diketo-L-gulonate reductase (332 aa).

Histidine 44 (proton donor) is an active-site residue. NAD(+)-binding positions include 168–174, 224–225, and 304–306; these read ITMIDMS, WK, and GHE.

It belongs to the LDH2/MDH2 oxidoreductase family. DlgD subfamily. As to quaternary structure, homodimer.

It is found in the cytoplasm. The catalysed reaction is 3-dehydro-L-gulonate + NAD(+) = 2,3-dioxo-L-gulonate + NADH + H(+). It catalyses the reaction 3-dehydro-L-gulonate + NADP(+) = 2,3-dioxo-L-gulonate + NADPH + H(+). Catalyzes the reduction of 2,3-diketo-L-gulonate in the presence of NADH, to form 3-keto-L-gulonate. In Citrobacter koseri (strain ATCC BAA-895 / CDC 4225-83 / SGSC4696), this protein is 2,3-diketo-L-gulonate reductase.